A 1085-amino-acid polypeptide reads, in one-letter code: MAAGSDLLDEVFFNSEVDEKVVSDLVGSLESQLAASAAHHHHLAPRTPEVRAAAAGALGNHVVSGSPAGAAGAGPAAPAEGAPGAAPEPPPAGRARPGGGGPQRPGPPSPRRPLVPAGPAPPAAKLRPPPEGSAGSCAPVPAAAAVAAGPEPAPAGPAKPAGPAALAARAGPGPGPGPGPGPGPGPGKPAGPGAAQTLNGSAALLNSHHAAAPAVSLVNNGPAALLPLPKPAAPGTVIQTPPFVGAAAPPAPAAPSPPAAPAPAAPAAAPPPPPPAPATLARPPGHPAGPPTAAPAVPPPAAAQNGGSAGAAPAPAPAAGGPAGVSGQPGPGAAAAAPAPGVKAESPKRVVQAAPPAAQTLAASGPASTAASMVIGPTMQGALPSPAAVPPPAPGTPTGLPKGAAGAVTQSLSRTPTATTSGIRATLTPTVLAPRLPQPPQNPTNIQNFQLPPGMVLVRSENGQLLMIPQQALAQMQAQAHAQPQTTMAPRPATPTSAPPVQISTVQAPGTPIIARQVTPTTIIKQVSQAQTTVQPSATLQRSPGVQPQLVLGGAAQTASLGTATAVQTGTPQRTVPGATTTSSAATETMENVKKCKNFLSTLIKLASSGKQSTETAANVKELVQNLLDGKIEAEDFTSRLYRELNSSPQPYLVPFLKRSLPALRQLTPDSAAFIQQSQQQPPPPTSQATTALTAVVLSSSVQRTAGKTAATVTSALQPPVLSLTQPTQVGVGKQGQPTPLVIQQPPKPGALIRPPQVTLTQTPMVALRQPHNRIMLTTPQQIQLNPLQPVPVVKPAVLPGTKALSAVSAQAAAAQKNKLKEPGGGSFRDDDDINDVASMAGVNLSEESARILATNSELVGTLTRSCKDETFLLQAPLQRRILEIGKKHGITELHPDVVSYVSHATQQRLQNLVEKISETAQQKNFSYKDDDRYEQASDVRAQLKFFEQLDQIEKQRKDEQEREILMRAAKSRSRQEDPEQLRLKQKAKEMQQQELAQMRQRDANLTALAAIGPRKKRKVDCPGPGSGAEGSGPGSVVPGSSGVGTPRQFTRQRITRVNLRDLIFCLENERETSHSLLLYKAFLK.

A compositionally biased stretch (low complexity) spans 66-85 (SPAGAAGAGPAAPAEGAPGA). Disordered stretches follow at residues 66-204 (SPAG…SAAL), 243-341 (FVGA…PAPG), and 383-425 (LPSP…GIRA). Over residues 104 to 131 (RPGPPSPRRPLVPAGPAPPAAKLRPPPE) the composition is skewed to pro residues. At S109 the chain carries Phosphoserine. Low complexity-rich tracts occupy residues 132–150 (GSAG…AAGP) and 158–171 (AKPA…ARAG). A compositionally biased stretch (pro residues) spans 173-189 (GPGPGPGPGPGPGPGKP). A compositionally biased stretch (low complexity) spans 191-204 (GPGAAQTLNGSAAL). 2 stretches are compositionally biased toward pro residues: residues 249-277 (PPAP…PPAP) and 284-301 (PGHP…PPPA). Over residues 302 to 320 (AAQNGGSAGAAPAPAPAAG) the composition is skewed to low complexity. The segment covering 321 to 330 (GPAGVSGQPG) has biased composition (gly residues). 2 stretches are compositionally biased toward low complexity: residues 331–341 (PGAAAAAPAPG) and 396–407 (TPTGLPKGAAGA). Residues 408–425 (VTQSLSRTPTATTSGIRA) show a composition bias toward polar residues. 2 positions are modified to asymmetric dimethylarginine: R424 and R435. Disordered regions lie at residues 479–499 (QAHA…TSAP) and 566–586 (AVQT…SSAA). Residues 590–687 (MENVKKCKNF…SQQQPPPPTS (98 aa)) form the TAFH domain. N6,N6-dimethyllysine occurs at positions 594, 595, 597, 605, 611, 621, 631, and 658. The segment at 870–913 (ETFLLQAPLQRRILEIGKKHGITELHPDVVSYVSHATQQRLQNL) is minimal region required to interact with TAF12. Residues 1015–1049 (RKKRKVDCPGPGSGAEGSGPGSVVPGSSGVGTPRQ) are disordered. Residues 1025-1034 (PGSGAEGSGP) show a composition bias toward gly residues. Positions 1035–1047 (GSVVPGSSGVGTP) are enriched in low complexity.

This sequence belongs to the TAF4 family. As to quaternary structure, component of the TFIID basal transcription factor complex, composed of TATA-box-binding protein TBP, and a number of TBP-associated factors (TAFs), including TAF1, TAF2, TAF3, TAF4, TAF5, TAF6, TAF7, TAF8, TAF9, TAF10, TAF11, TAF12 and TAF13. Component of the TFTC-HAT complex, at least composed of TAF5L, TAF6L, TADA3L, SUPT3H, TAF2, TAF4, TAF5, GCN5L2/GCN5, TAF10, TAF12 and TRRAP. Component of some MLL1/MLL complex, at least composed of the core components KMT2A/MLL1, ASH2L, HCFC1/HCF1, WDR5 and RBBP5, as well as the facultative components BACC1, CHD8, E2F6, HSP70, INO80C, KANSL1, LAS1L, MAX, MCRS1, MGA, MYST1/MOF, PELP1, PHF20, PRP31, RING2, RUVB1/TIP49A, RUVB2/TIP49B, SENP3, TAF1, TAF4, TAF6, TAF7, TAF9 and TEX10. Interacts with ATF7; the interaction inhibits ATF7-mediated tranactivation. (Microbial infection) Interacts with SV40 Large T antigen.

It localises to the nucleus. In terms of biological role, the TFIID basal transcription factor complex plays a major role in the initiation of RNA polymerase II (Pol II)-dependent transcription. TFIID recognizes and binds promoters with or without a TATA box via its subunit TBP, a TATA-box-binding protein, and promotes assembly of the pre-initiation complex (PIC). The TFIID complex consists of TBP and TBP-associated factors (TAFs), including TAF1, TAF2, TAF3, TAF4, TAF5, TAF6, TAF7, TAF8, TAF9, TAF10, TAF11, TAF12 and TAF13. TAF4 may maintain an association between the TFIID and TFIIA complexes, while bound to the promoter, together with TBP, during PIC assembly. Potentiates transcriptional activation by the AF-2S of the retinoic acid, vitamin D3 and thyroid hormone. The chain is Transcription initiation factor TFIID subunit 4 (TAF4) from Homo sapiens (Human).